The sequence spans 91 residues: Small ribosomal subunit protein uS19 (91 aa).

It belongs to the universal ribosomal protein uS19 family.

Functionally, protein S19 forms a complex with S13 that binds strongly to the 16S ribosomal RNA. The sequence is that of Small ribosomal subunit protein uS19 from Dechloromonas aromatica (strain RCB).